A 1486-amino-acid chain; its full sequence is Chromosome partition protein MukB (1486 aa).

Position 34–41 (34–41) interacts with ATP; sequence GGNGAGKS. Coiled-coil stretches lie at residues 326 to 418, 444 to 480, and 509 to 603; these read LEAD…QYNQ, LETFQAKELEATEKMLSLEQKMSMAQTAHSQFEQAYQ, and RHLA…RAPV. The tract at residues 666 to 783 is flexible hinge; that stretch reads PGGSEDQRLN…EVPLFGRAAR (118 aa). Coiled-coil stretches lie at residues 835-923, 977-1115, and 1209-1266; these read EAEI…AKLE, EMLS…TAKA, and VEAI…QNVS.

Belongs to the SMC family. MukB subfamily. As to quaternary structure, homodimerization via its hinge domain. Binds to DNA via its C-terminal region. Interacts, and probably forms a ternary complex, with MukE and MukF via its C-terminal region. The complex formation is stimulated by calcium or magnesium. Interacts with tubulin-related protein FtsZ.

It is found in the cytoplasm. It localises to the nucleoid. Plays a central role in chromosome condensation, segregation and cell cycle progression. Functions as a homodimer, which is essential for chromosome partition. Involved in negative DNA supercoiling in vivo, and by this means organize and compact chromosomes. May achieve or facilitate chromosome segregation by condensation DNA from both sides of a centrally located replisome during cell division. The chain is Chromosome partition protein MukB from Escherichia fergusonii (strain ATCC 35469 / DSM 13698 / CCUG 18766 / IAM 14443 / JCM 21226 / LMG 7866 / NBRC 102419 / NCTC 12128 / CDC 0568-73).